The sequence spans 244 residues: Putative quercetin 2,3-dioxygenase Mb0187c (244 aa).

H60, H62, H104, and E106 together coordinate a divalent metal cation.

The protein belongs to the pirin family. A divalent metal cation is required as a cofactor.

The enzyme catalyses quercetin + O2 = 2-(3,4-dihydroxybenzoyloxy)-4,6-dihydroxybenzoate + CO. It functions in the pathway flavonoid metabolism; quercetin degradation. Its function is as follows. Putative quercetin 2,3-dioxygenase. This is Putative quercetin 2,3-dioxygenase Mb0187c from Mycobacterium bovis (strain ATCC BAA-935 / AF2122/97).